Here is a 134-residue protein sequence, read N- to C-terminus: Arginine decarboxylase proenzyme (134 aa).

Serine 82 serves as the catalytic Schiff-base intermediate with substrate; via pyruvic acid. At serine 82 the chain carries Pyruvic acid (Ser); by autocatalysis. Residue histidine 87 is the Proton acceptor; for processing activity of the active site. Cysteine 102 serves as the catalytic Proton donor; for catalytic activity.

Belongs to the prokaryotic AdoMetDC family. Type 1 subfamily. As to quaternary structure, heterooctamer of four alpha and four beta chains arranged as a tetramer of alpha/beta heterodimers. Pyruvate is required as a cofactor. Is synthesized initially as an inactive proenzyme. Formation of the active enzyme involves a self-maturation process in which the active site pyruvoyl group is generated from an internal serine residue via an autocatalytic post-translational modification. Two non-identical subunits are generated from the proenzyme in this reaction, and the pyruvate is formed at the N-terminus of the alpha chain, which is derived from the carboxyl end of the proenzyme. The post-translation cleavage follows an unusual pathway, termed non-hydrolytic serinolysis, in which the side chain hydroxyl group of the serine supplies its oxygen atom to form the C-terminus of the beta chain, while the remainder of the serine residue undergoes an oxidative deamination to produce ammonia and the pyruvoyl group blocking the N-terminus of the alpha chain.

The enzyme catalyses L-arginine + H(+) = agmatine + CO2. It functions in the pathway amine and polyamine biosynthesis; agmatine biosynthesis; agmatine from L-arginine: step 1/1. In terms of biological role, specifically catalyzes the decarboxylation of L-arginine to agmatine. Has no S-adenosylmethionine decarboxylase (AdoMetDC) activity. This is Arginine decarboxylase proenzyme from Caldivirga maquilingensis (strain ATCC 700844 / DSM 13496 / JCM 10307 / IC-167).